A 402-amino-acid chain; its full sequence is Flavohemoprotein (402 aa).

Positions 1–136 (MLSEKTIEIV…IADAFISIEA (136 aa)) constitute a Globin domain. His85 contacts heme b. Active-site charge relay system residues include Tyr95 and Glu135. A reductase region spans residues 147–402 (GGWKDFRNFV…EFFGPAASLQ (256 aa)). Residues 150–260 (KDFRNFVVVK…SAPAGDFVLN (111 aa)) form the FAD-binding FR-type domain. Residues Tyr188 and 204–207 (RQYS) contribute to the FAD site. 273–278 (GVGITP) is an NADP(+) binding site. An FAD-binding site is contributed by 394–397 (FFGP).

Belongs to the globin family. Two-domain flavohemoproteins subfamily. This sequence in the C-terminal section; belongs to the flavoprotein pyridine nucleotide cytochrome reductase family. Requires heme b as cofactor. FAD serves as cofactor.

The catalysed reaction is 2 nitric oxide + NADPH + 2 O2 = 2 nitrate + NADP(+) + H(+). It catalyses the reaction 2 nitric oxide + NADH + 2 O2 = 2 nitrate + NAD(+) + H(+). In terms of biological role, is involved in NO detoxification in an aerobic process, termed nitric oxide dioxygenase (NOD) reaction that utilizes O(2) and NAD(P)H to convert NO to nitrate, which protects the bacterium from various noxious nitrogen compounds. Therefore, plays a central role in the inducible response to nitrosative stress. In Bacillus thuringiensis subsp. konkukian (strain 97-27), this protein is Flavohemoprotein.